The primary structure comprises 158 residues: C-type lectin galactose-binding isoform (158 aa).

The first 20 residues, 1–20, serve as a signal peptide directing secretion; it reads MGRFLLVTLSLLVVAFSLNG. 3 disulfides stabilise this stretch: Cys26-Cys37, Cys54-Cys154, and Cys129-Cys146. The C-type lectin domain occupies 33–155; the sequence is KNGYCYKVFK…CTALRPFLCQ (123 aa). Residues Gln119, Asp121, Glu127, Asn142, and Asp143 each coordinate Ca(2+). The Galactose-binding signature appears at 119-121; it reads QPD.

It belongs to the true venom lectin family. In terms of assembly, homodimer; disulfide-linked. In terms of tissue distribution, expressed by the venom gland.

Its subcellular location is the secreted. Its function is as follows. Galactose-binding lectin that binds to and agglutinates erythrocytes in a calcium-dependent manner. This Hoplocephalus stephensii (Stephens's banded snake) protein is C-type lectin galactose-binding isoform.